The chain runs to 393 residues: MTIFPKTLMLLGSGELGKEVAIAGKRLGCKVIACDRYEEAPAMQVADLAIVLDMNNHNSLQKTIRDYKPDVVIPEIEALAVEALKDIEKEGINVIPNARATAITMNRDQIRNLAAEKLAIKTANYGYASNIEELKEVSKKVGFPLLVKPVMSSSGKGQSLIKDKNDLEKAWDLAIKEARGDSKQVIIEEYINFDLEITLLTIKQSNHQTIFCPPIGHEQKGGDYQCSWQPQKLSFDQLKEAKSIAKKVTNELGGIGLFGVEFFIRGEEVIFSELSPRPHDTGLVTLISQNLNEFELHLRAILGLPIPSIECVSPSASRVILSQESFAKVAYKGIEKALEIQNSKIMIFGKPNTKKGRRMGVSLAQGKTLEEARFKADKSAKCIQIFEAKEAQS.

N(1)-(5-phospho-beta-D-ribosyl)glycinamide contacts are provided by residues 15 to 16 and Glu-75; that span reads EL. ATP is bound by residues Arg-107, Lys-148, 153–158, 188–191, and Glu-196; these read SSGKGQ and EEYI. The ATP-grasp domain maps to 112-302; that stretch reads NLAAEKLAIK…EFELHLRAIL (191 aa). 2 residues coordinate Mg(2+): Glu-261 and Glu-273. Residues Asp-280, Lys-350, and 357 to 358 contribute to the N(1)-(5-phospho-beta-D-ribosyl)glycinamide site; that span reads RR.

Belongs to the PurK/PurT family. Homodimer.

It carries out the reaction N(1)-(5-phospho-beta-D-ribosyl)glycinamide + formate + ATP = N(2)-formyl-N(1)-(5-phospho-beta-D-ribosyl)glycinamide + ADP + phosphate + H(+). The protein operates within purine metabolism; IMP biosynthesis via de novo pathway; N(2)-formyl-N(1)-(5-phospho-D-ribosyl)glycinamide from N(1)-(5-phospho-D-ribosyl)glycinamide (formate route): step 1/1. In terms of biological role, involved in the de novo purine biosynthesis. Catalyzes the transfer of formate to 5-phospho-ribosyl-glycinamide (GAR), producing 5-phospho-ribosyl-N-formylglycinamide (FGAR). Formate is provided by PurU via hydrolysis of 10-formyl-tetrahydrofolate. This is Formate-dependent phosphoribosylglycinamide formyltransferase from Prochlorococcus marinus (strain SARG / CCMP1375 / SS120).